Here is a 290-residue protein sequence, read N- to C-terminus: Signal peptidase I (290 aa).

Residues 1–13 (MKFLRSVYAFCSS) lie on the Cytoplasmic side of the membrane. A helical membrane pass occupies residues 14-34 (WVGTIVIVLLVIFFIAQAFII). At 35–290 (PSRSMVGTLY…KIIKKENATH (256 aa)) the chain is on the extracellular side. Residues S38 and K106 contribute to the active site.

This sequence belongs to the peptidase S26 family.

Its subcellular location is the cell membrane. It catalyses the reaction Cleavage of hydrophobic, N-terminal signal or leader sequences from secreted and periplasmic proteins.. In Helicobacter pylori (strain ATCC 700392 / 26695) (Campylobacter pylori), this protein is Signal peptidase I (lepB).